We begin with the raw amino-acid sequence, 314 residues long: DNA-directed RNA polymerase subunit alpha (314 aa).

The tract at residues Met-1 to Thr-228 is alpha N-terminal domain (alpha-NTD). An alpha C-terminal domain (alpha-CTD) region spans residues Lys-245–Asp-314.

Belongs to the RNA polymerase alpha chain family. Homodimer. The RNAP catalytic core consists of 2 alpha, 1 beta, 1 beta' and 1 omega subunit. When a sigma factor is associated with the core the holoenzyme is formed, which can initiate transcription.

The enzyme catalyses RNA(n) + a ribonucleoside 5'-triphosphate = RNA(n+1) + diphosphate. DNA-dependent RNA polymerase catalyzes the transcription of DNA into RNA using the four ribonucleoside triphosphates as substrates. This is DNA-directed RNA polymerase subunit alpha from Macrococcus caseolyticus (strain JCSC5402) (Macrococcoides caseolyticum).